The sequence spans 209 residues: MKRLGAEFYQAPTLELAERLLGKIFVRCEDTGMVTKARIVETEAYLGEGDEACHAWRGMTNRNRAMFGPPGHLYIYFTYGCHYMINIVSEQEGTAGAVLLRAMEPLEGIDRMQERRGTADERALMSGPGKLAQALGIGPELYGSSLLGESCWLEDAPEIPEELIGTSPRIGITRSTELPWRKFVTASPHVSTTRLGAPKKKRQKRLERR.

The disordered stretch occupies residues 189–209 (HVSTTRLGAPKKKRQKRLERR). Over residues 197-209 (APKKKRQKRLERR) the composition is skewed to basic residues.

The protein belongs to the DNA glycosylase MPG family.

The chain is Putative 3-methyladenine DNA glycosylase from Chlorobaculum parvum (strain DSM 263 / NCIMB 8327) (Chlorobium vibrioforme subsp. thiosulfatophilum).